The primary structure comprises 232 residues: LexA repressor (232 aa).

Polar residues predominate over residues 1 to 10 (MDDSNDSSSA). Positions 1-22 (MDDSNDSSSAGPDGRLHAVDPS) are disordered. A DNA-binding region (H-T-H motif) is located at residues 47–67 (IREIGDAVGLTSTSSVAHQLR). Active-site for autocatalytic cleavage activity residues include serine 156 and lysine 193.

The protein belongs to the peptidase S24 family. Homodimer.

It carries out the reaction Hydrolysis of Ala-|-Gly bond in repressor LexA.. Its function is as follows. Represses a number of genes involved in the response to DNA damage (SOS response), including recA and lexA. In the presence of single-stranded DNA, RecA interacts with LexA causing an autocatalytic cleavage which disrupts the DNA-binding part of LexA, leading to derepression of the SOS regulon and eventually DNA repair. The polypeptide is LexA repressor (Mycolicibacterium paratuberculosis (strain ATCC BAA-968 / K-10) (Mycobacterium paratuberculosis)).